The chain runs to 883 residues: Translation initiation factor IF-2 (883 aa).

Disordered regions lie at residues 52-102 (KGRD…VNVE) and 115-297 (VEAE…PTQP). Basic and acidic residues-rich tracts occupy residues 115–179 (VEAE…REAT) and 204–237 (AAEKEEARRREEEKERRRLEQEARREREAEERAA). A compositionally biased stretch (low complexity) spans 239 to 248 (KTGATAPAAK). Residues 265 to 275 (PGRRGGKKGGR) are compositionally biased toward basic residues. Residues 276–285 (RAASGGEAAK) are compositionally biased toward low complexity. The tr-type G domain maps to 383 to 550 (PRPPVVTVMG…AILLQAELME (168 aa)). The tract at residues 392–399 (GHVDHGKT) is G1. 392-399 (GHVDHGKT) serves as a coordination point for GTP. Residues 417–421 (GITQH) form a G2 region. The segment at 438 to 441 (DTPG) is G3. Residues 438-442 (DTPGH) and 492-495 (NKID) each bind GTP. Residues 492-495 (NKID) form a G4 region. The G5 stretch occupies residues 528–530 (SAK).

It belongs to the TRAFAC class translation factor GTPase superfamily. Classic translation factor GTPase family. IF-2 subfamily.

It localises to the cytoplasm. Its function is as follows. One of the essential components for the initiation of protein synthesis. Protects formylmethionyl-tRNA from spontaneous hydrolysis and promotes its binding to the 30S ribosomal subunits. Also involved in the hydrolysis of GTP during the formation of the 70S ribosomal complex. The protein is Translation initiation factor IF-2 of Alkalilimnicola ehrlichii (strain ATCC BAA-1101 / DSM 17681 / MLHE-1).